Consider the following 109-residue polypeptide: Parvalbumin beta-1 (109 aa).

An N-acetylserine modification is found at S2. EF-hand domains lie at 39-74 (KSHE…FGAG) and 78-109 (LTAA…LVKA). 11 residues coordinate Ca(2+): D52, D54, S56, F58, E60, E63, D91, D93, D95, M97, and E102.

The protein belongs to the parvalbumin family.

Its function is as follows. In muscle, parvalbumin is thought to be involved in relaxation after contraction. It binds two calcium ions. This Gadus chalcogrammus (Alaska pollock) protein is Parvalbumin beta-1.